The chain runs to 238 residues: Probable succinyl-CoA:3-ketoacid coenzyme A transferase subunit A (238 aa).

Residue 24–30 (GGFGLCG) coordinates CoA.

It belongs to the 3-oxoacid CoA-transferase subunit A family. In terms of assembly, heterodimer of a subunit A and a subunit B.

The enzyme catalyses a 3-oxo acid + succinyl-CoA = a 3-oxoacyl-CoA + succinate. The sequence is that of Probable succinyl-CoA:3-ketoacid coenzyme A transferase subunit A (scoA) from Bacillus subtilis (strain 168).